Here is a 930-residue protein sequence, read N- to C-terminus: Short transient receptor potential channel 6 (930 aa).

The tract at residues 1–27 is disordered; the sequence is MSQSPRFVTRRGGSLKAAPGAGTRRNE. Residues 1–437 are Cytoplasmic-facing; the sequence is MSQSPRFVTR…CSKMGKILRG (437 aa). 4 ANK repeats span residues 96 to 125, 131 to 160, 162 to 188, and 217 to 246; these read IEEERFLDAAEYGNIPVVRKMLEECHSLNV, MGQNALQLAVANEHLEITELLLKKENLSRV, DALLLAISKGYVRIVEAILNHPAFAEG, and HDVTPIILAAHCQEYEIVHTLLRKGARIER. Residues 438-458 form a helical membrane-spanning segment; that stretch reads PFMKFVAHAASFTIFLGLLVM. The Extracellular segment spans residues 459–486; sequence NAADRFEGTKLLPNETSTDNARQLFRMK. Residues 487-507 traverse the membrane as a helical segment; it reads TSCFSWMEMLIISWVIGMIWA. Over 508–520 the chain is Cytoplasmic; that stretch reads ECKEIWTQGPKEY. A helical transmembrane segment spans residues 521-541; that stretch reads LFELWNMLDFGMLAIFAASFI. Residues 542-591 lie on the Extracellular side of the membrane; it reads ARFMAFWHASKAQSIIDANDTLKDLTKVTLGDNVKYYNLARIKWDPTDPQ. Asparagine 560 is a glycosylation site (N-linked (GlcNAc...) asparagine). Residues 592–612 form a helical membrane-spanning segment; it reads IISEGLYAIAVVLSFSRIAYI. At 613-635 the chain is on the cytoplasmic side; the sequence is LPANESFGPLQISLGRTVKDIFK. Residues 636 to 656 traverse the membrane as a helical segment; it reads FMVIFIMVFVAFMIGMFNLYS. The Extracellular portion of the chain corresponds to 657 to 705; sequence YYIGAKQNEAFTTVEESFKTLFWAIFGLSEVKSVVINYNHKFIENIGYV. Residues 706–726 form a helical membrane-spanning segment; that stretch reads LYGVYNVTMVIVLLNMLIAMI. The Cytoplasmic segment spans residues 727-930; sequence NSSFQEIEDD…LEPKLEESRR (204 aa). Serine 814 carries the phosphoserine modification.

The protein belongs to the transient receptor (TC 1.A.4) family. STrpC subfamily. TRPC6 sub-subfamily. As to quaternary structure, homodimer; forms channel complex. Interacts with MX1 and RNF24. Phosphorylated by FYN, leading to an increase of TRPC6 channel activity. In terms of processing, N-glycosylated. Lung and brain.

Its subcellular location is the cell membrane. It catalyses the reaction Ca(2+)(in) = Ca(2+)(out). Forms a receptor-activated non-selective calcium permeant cation channel. Probably is operated by a phosphatidylinositol second messenger system activated by receptor tyrosine kinases or G-protein coupled receptors. Activated by diacylglycerol (DAG) in a membrane-delimited fashion, independently of protein kinase C. Seems not to be activated by intracellular calcium store depletion. This Mus musculus (Mouse) protein is Short transient receptor potential channel 6.